We begin with the raw amino-acid sequence, 691 residues long: Glycine--tRNA ligase beta subunit (691 aa).

This sequence belongs to the class-II aminoacyl-tRNA synthetase family. As to quaternary structure, tetramer of two alpha and two beta subunits.

The protein localises to the cytoplasm. It catalyses the reaction tRNA(Gly) + glycine + ATP = glycyl-tRNA(Gly) + AMP + diphosphate. This is Glycine--tRNA ligase beta subunit from Limosilactobacillus reuteri (strain DSM 20016) (Lactobacillus reuteri).